The following is a 468-amino-acid chain: 6-phospho-beta-galactosidase (468 aa).

Residues Gln19, His116, Asn159, Glu160, and Asn297 each coordinate D-galactose 6-phosphate. Residue Glu160 is the Proton donor of the active site. Glu375 serves as the catalytic Nucleophile. The D-galactose 6-phosphate site is built by Ser428, Trp429, Lys435, and Tyr437.

The protein belongs to the glycosyl hydrolase 1 family.

It catalyses the reaction a 6-phospho-beta-D-galactoside + H2O = D-galactose 6-phosphate + an alcohol. It functions in the pathway carbohydrate metabolism; lactose degradation; D-galactose 6-phosphate and beta-D-glucose from lactose 6-phosphate: step 1/1. This is 6-phospho-beta-galactosidase from Streptococcus pyogenes serotype M1.